A 60-amino-acid polypeptide reads, in one-letter code: U20-myrmicitoxin-Mri1a (60 aa).

Residues 1–24 (MKSVILLFAVIAIIVAVIIPAING) form the signal peptide. Positions 25-34 (ESSSNPSANA) are excised as a propeptide.

The protein belongs to the formicidae venom precursor-01 superfamily. As to expression, expressed by the venom gland.

The protein localises to the secreted. Induces paralysis 5 minutes after injection into blowflies (L.caesar), and then death within 24 hours. May have antimicrobial properties, like most ant linear peptides. This is U20-myrmicitoxin-Mri1a from Manica rubida (European giant red ant).